Consider the following 305-residue polypeptide: Tyrosine recombinase XerC (305 aa).

One can recognise a Core-binding (CB) domain in the interval 1 to 94; sequence MSSVDEFLTY…ACRSYYAWLL (94 aa). In terms of domain architecture, Tyr recombinase spans 115–292; the sequence is KLPQVLDADE…DFQHLAKVYD (178 aa). Active-site residues include Arg154, Lys178, His244, Arg247, and His270. The O-(3'-phospho-DNA)-tyrosine intermediate role is filled by Tyr279.

The protein belongs to the 'phage' integrase family. XerC subfamily. Forms a cyclic heterotetrameric complex composed of two molecules of XerC and two molecules of XerD.

The protein resides in the cytoplasm. Functionally, site-specific tyrosine recombinase, which acts by catalyzing the cutting and rejoining of the recombining DNA molecules. The XerC-XerD complex is essential to convert dimers of the bacterial chromosome into monomers to permit their segregation at cell division. It also contributes to the segregational stability of plasmids. This chain is Tyrosine recombinase XerC, found in Xanthomonas axonopodis pv. citri (strain 306).